The chain runs to 384 residues: Spermidine/putrescine import ATP-binding protein PotA (384 aa).

An ABC transporter domain is found at 6-238; the sequence is IAFQNVSKVF…PINHFVATFI (233 aa). 40-47 is a binding site for ATP; it reads GASGSGKS.

The protein belongs to the ABC transporter superfamily. Spermidine/putrescine importer (TC 3.A.1.11.1) family. As to quaternary structure, the complex is composed of two ATP-binding proteins (PotA), two transmembrane proteins (PotB and PotC) and a solute-binding protein (PotD).

It localises to the cell membrane. It catalyses the reaction ATP + H2O + polyamine-[polyamine-binding protein]Side 1 = ADP + phosphate + polyamineSide 2 + [polyamine-binding protein]Side 1.. In terms of biological role, part of the ABC transporter complex PotABCD involved in spermidine/putrescine import. Responsible for energy coupling to the transport system. The sequence is that of Spermidine/putrescine import ATP-binding protein PotA from Streptococcus thermophilus (strain ATCC BAA-250 / LMG 18311).